The sequence spans 140 residues: Small ribosomal subunit protein eS17y (140 aa).

Belongs to the eukaryotic ribosomal protein eS17 family.

This is Small ribosomal subunit protein eS17y (RPS17B) from Arabidopsis thaliana (Mouse-ear cress).